The primary structure comprises 130 residues: Protein ApaG (130 aa).

The ApaG domain maps to 3 to 127 (SQTTRDIEVT…FSLDSPHEKP (125 aa)).

The chain is Protein ApaG from Paramagnetospirillum magneticum (strain ATCC 700264 / AMB-1) (Magnetospirillum magneticum).